The following is a 506-amino-acid chain: Carboxyl-terminal PDZ ligand of neuronal nitric oxide synthase protein (506 aa).

Residues 26–196 (FQHGICFEAK…ESERNSNSSG (171 aa)) enclose the PID domain. Disordered stretches follow at residues 175–224 (HTQQ…VEVP) and 241–260 (DAVG…HPQE). Phosphoserine is present on residues Ser-188, Ser-192, and Ser-195. Positions 203–213 (TGAERASTATA) are enriched in low complexity. Ser-266 is subject to Phosphoserine. Residues 322-363 (AAEAAARLEAQARVHQLLLQNKDMLQHISLLVKQVQELELKL) are a coiled coil. Ser-371, Ser-374, Ser-401, and Ser-417 each carry phosphoserine. The tract at residues 494-506 (QELGDGLDDEIAV) is interaction with NOS1. The PDZ-binding signature appears at 504-506 (IAV).

Interacts with the PDZ domain of NOS1 or the second PDZ domain of DLG4 through its C-terminus. Interacts with RASD1 and SYN1, SYN2 and SYN3 via its PID domain. Forms a ternary complex with NOS1 and RASD1. Forms a ternary complex with NOS1 and SYN1. In terms of tissue distribution, expressed in kidney glomeruli podocytes.

It localises to the cell projection. The protein localises to the filopodium. The protein resides in the podosome. In terms of biological role, adapter protein involved in neuronal nitric-oxide (NO) synthesis regulation via its association with nNOS/NOS1. The complex formed with NOS1 and synapsins is necessary for specific NO and synapsin functions at a presynaptic level. Mediates an indirect interaction between NOS1 and RASD1 leading to enhance the ability of NOS1 to activate RASD1. Competes with DLG4 for interaction with NOS1, possibly affecting NOS1 activity by regulating the interaction between NOS1 and DLG4. In kidney podocytes, plays a role in podosomes and filopodia formation through CDC42 activation. The sequence is that of Carboxyl-terminal PDZ ligand of neuronal nitric oxide synthase protein from Homo sapiens (Human).